The primary structure comprises 339 residues: Small ribosomal subunit biogenesis GTPase RsgA (339 aa).

A CP-type G domain is found at 111 to 271 (MRGLLKPVAA…LIDSPGIREF (161 aa)). GTP is bound by residues 159-162 (NKAD) and 213-221 (GQSGVGKSS). Residues Cys-295, Cys-300, His-302, and Cys-308 each coordinate Zn(2+).

The protein belongs to the TRAFAC class YlqF/YawG GTPase family. RsgA subfamily. In terms of assembly, monomer. Associates with 30S ribosomal subunit, binds 16S rRNA. Zn(2+) serves as cofactor.

The protein localises to the cytoplasm. Its function is as follows. One of several proteins that assist in the late maturation steps of the functional core of the 30S ribosomal subunit. Helps release RbfA from mature subunits. May play a role in the assembly of ribosomal proteins into the subunit. Circularly permuted GTPase that catalyzes slow GTP hydrolysis, GTPase activity is stimulated by the 30S ribosomal subunit. The polypeptide is Small ribosomal subunit biogenesis GTPase RsgA (Pseudomonas aeruginosa (strain ATCC 15692 / DSM 22644 / CIP 104116 / JCM 14847 / LMG 12228 / 1C / PRS 101 / PAO1)).